The following is a 190-amino-acid chain: Scytalone dehydratase-like protein Arp1 (190 aa).

Tyrosine 67 is a binding site for substrate. Active-site residues include histidine 102 and histidine 127. Asparagine 148 provides a ligand contact to substrate.

The protein belongs to the scytalone dehydratase family. Homotrimer. Each subunit contains an active site, located in the central part of the hydrophobic core of the monomer, which functions independently.

Functionally, scytalone dehydratase-like protein; part of the Pks2 gene cluster that mediates the formation of infectious structures (appressoria), enabling these fungi to kill insects faster. The product of the Pks2 gene cluster is different from the one of Pks1 and has still not been identified. The sequence is that of Scytalone dehydratase-like protein Arp1 from Metarhizium anisopliae (strain ARSEF 549).